A 651-amino-acid chain; its full sequence is Peptide-N(4)-(N-acetyl-beta-glucosaminyl)asparagine amidase (651 aa).

Positions 29-90 constitute a PUB domain; it reads EASRLLLTYA…EGETHMVFPK (62 aa). The Zn(2+) site is built by cysteine 246, cysteine 249, cysteine 279, and cysteine 282. The active-site Nucleophile is cysteine 305. Catalysis depends on residues histidine 332 and aspartate 349. The region spanning 450–651 is the PAW domain; the sequence is EFGGRTSGSM…LEMIIKLADL (202 aa).

Belongs to the transglutaminase-like superfamily. PNGase family. Zn(2+) is required as a cofactor.

Its subcellular location is the cytoplasm. The catalysed reaction is Hydrolysis of an N(4)-(acetyl-beta-D-glucosaminyl)asparagine residue in which the glucosamine residue may be further glycosylated, to yield a (substituted) N-acetyl-beta-D-glucosaminylamine and a peptide containing an aspartate residue.. Specifically deglycosylates the denatured form of N-linked glycoproteins in the cytoplasm and assists their proteasome-mediated degradation. Cleaves the beta-aspartyl-glucosamine (GlcNAc) of the glycan and the amide side chain of Asn, converting Asn to Asp. Prefers proteins containing high-mannose over those bearing complex type oligosaccharides. Can recognize misfolded proteins in the endoplasmic reticulum that are exported to the cytosol to be destroyed and deglycosylate them, while it has no activity toward native proteins. Deglycosylation is a prerequisite for subsequent proteasome-mediated degradation of some, but not all, misfolded glycoproteins. The chain is Peptide-N(4)-(N-acetyl-beta-glucosaminyl)asparagine amidase (NGLY1) from Gallus gallus (Chicken).